A 453-amino-acid polypeptide reads, in one-letter code: Tubulin alpha-2 chain (453 aa).

Glutamine 11 contacts GTP. Lysine 40 is subject to N6-acetyllysine. GTP contacts are provided by glutamate 71, glycine 144, threonine 145, threonine 179, asparagine 206, and asparagine 228. Glutamate 71 contributes to the Mg(2+) binding site. Glutamate 254 is an active-site residue. A disordered region spans residues 432–453 (YEEVGAETAEGEGEEEDFGEEY).

This sequence belongs to the tubulin family. In terms of assembly, dimer of alpha and beta chains. A typical microtubule is a hollow water-filled tube with an outer diameter of 25 nm and an inner diameter of 15 nM. Alpha-beta heterodimers associate head-to-tail to form protofilaments running lengthwise along the microtubule wall with the beta-tubulin subunit facing the microtubule plus end conferring a structural polarity. Microtubules usually have 13 protofilaments but different protofilament numbers can be found in some organisms and specialized cells. Requires Mg(2+) as cofactor. Undergoes a tyrosination/detyrosination cycle, the cyclic removal and re-addition of a C-terminal tyrosine residue by the enzymes tubulin tyrosine carboxypeptidase (TTCP) and tubulin tyrosine ligase (TTL), respectively. Post-translationally, acetylation of alpha chains at Lys-40 stabilizes microtubules and affects affinity and processivity of microtubule motors. This modification has a role in multiple cellular functions, ranging from cell motility, cell cycle progression or cell differentiation to intracellular trafficking and signaling.

Its subcellular location is the cytoplasm. The protein localises to the cytoskeleton. The enzyme catalyses GTP + H2O = GDP + phosphate + H(+). Tubulin is the major constituent of microtubules, a cylinder consisting of laterally associated linear protofilaments composed of alpha- and beta-tubulin heterodimers. Microtubules grow by the addition of GTP-tubulin dimers to the microtubule end, where a stabilizing cap forms. Below the cap, tubulin dimers are in GDP-bound state, owing to GTPase activity of alpha-tubulin. This Pelvetia fastigiata (Brown alga) protein is Tubulin alpha-2 chain (TUBA2).